The chain runs to 177 residues: Phycocyanin-645 beta chain (177 aa).

Tyr18 provides a ligand contact to mesobiliverdin. (2R,3E)-phycocyanobilin-binding residues include Lys28, Asn35, and Asp39. The 15,16-dihydrobiliverdin site is built by Cys50, Asp54, and Cys61. The (2R,3E)-phycocyanobilin site is built by Arg77, Cys82, Arg84, and Asp85. Residue Gln148 coordinates 15,16-dihydrobiliverdin. The (2R,3E)-phycocyanobilin site is built by Pro154, Gly156, and Cys158.

The protein belongs to the phycobiliprotein family. In terms of assembly, heterotetramer of 2 different alpha chains and 2 identical beta chains which form 2 alpha-beta heterodimers within the heterotetramer. In terms of processing, contains two phycocyanobilin chromophores, one mesobiliverdin chromophore and one 15,16-dihydrobiliverdin chromophore with binding mediated by both the alpha and beta subunits.

The protein localises to the plastid. It localises to the chloroplast thylakoid membrane. In terms of biological role, light-harvesting photosynthetic tetrapyrrole chromophore-protein from the phycobiliprotein complex. This Chroomonas sp protein is Phycocyanin-645 beta chain.